A 209-amino-acid polypeptide reads, in one-letter code: Uracil phosphoribosyltransferase (209 aa).

5-phospho-alpha-D-ribose 1-diphosphate-binding positions include arginine 79, arginine 104, and 131–139 (DPMLATGGS). Uracil-binding positions include isoleucine 194 and 199–201 (GDA). Residue aspartate 200 coordinates 5-phospho-alpha-D-ribose 1-diphosphate.

It belongs to the UPRTase family. Mg(2+) is required as a cofactor.

The catalysed reaction is UMP + diphosphate = 5-phospho-alpha-D-ribose 1-diphosphate + uracil. It functions in the pathway pyrimidine metabolism; UMP biosynthesis via salvage pathway; UMP from uracil: step 1/1. Its activity is regulated as follows. Allosterically activated by GTP. In terms of biological role, catalyzes the conversion of uracil and 5-phospho-alpha-D-ribose 1-diphosphate (PRPP) to UMP and diphosphate. The chain is Uracil phosphoribosyltransferase from Ligilactobacillus salivarius (strain UCC118) (Lactobacillus salivarius).